Reading from the N-terminus, the 464-residue chain is ATP synthase subunit beta (464 aa).

153–160 (GGAGVGKT) lines the ATP pocket.

This sequence belongs to the ATPase alpha/beta chains family. F-type ATPases have 2 components, CF(1) - the catalytic core - and CF(0) - the membrane proton channel. CF(1) has five subunits: alpha(3), beta(3), gamma(1), delta(1), epsilon(1). CF(0) has three main subunits: a(1), b(2) and c(9-12). The alpha and beta chains form an alternating ring which encloses part of the gamma chain. CF(1) is attached to CF(0) by a central stalk formed by the gamma and epsilon chains, while a peripheral stalk is formed by the delta and b chains.

The protein resides in the cell membrane. The enzyme catalyses ATP + H2O + 4 H(+)(in) = ADP + phosphate + 5 H(+)(out). Its function is as follows. Produces ATP from ADP in the presence of a proton gradient across the membrane. The catalytic sites are hosted primarily by the beta subunits. In Alkaliphilus oremlandii (strain OhILAs) (Clostridium oremlandii (strain OhILAs)), this protein is ATP synthase subunit beta.